The primary structure comprises 340 residues: Aliphatic sulfonates import ATP-binding protein SsuB 1 (340 aa).

Residues 44 to 72 are disordered; the sequence is THHHARVAAQGHARGDAQPPAGALARDDG. One can recognise an ABC transporter domain in the interval 80–299; sequence VQLRGVGKRY…ARASAGFAAL (220 aa). An ATP-binding site is contributed by 112–119; sequence GRSGCGKS.

This sequence belongs to the ABC transporter superfamily. Aliphatic sulfonates importer (TC 3.A.1.17.2) family. In terms of assembly, the complex is composed of two ATP-binding proteins (SsuB), two transmembrane proteins (SsuC) and a solute-binding protein (SsuA).

It localises to the cell inner membrane. The catalysed reaction is ATP + H2O + aliphatic sulfonate-[sulfonate-binding protein]Side 1 = ADP + phosphate + aliphatic sulfonateSide 2 + [sulfonate-binding protein]Side 1.. Its function is as follows. Part of the ABC transporter complex SsuABC involved in aliphatic sulfonates import. Responsible for energy coupling to the transport system. The polypeptide is Aliphatic sulfonates import ATP-binding protein SsuB 1 (Paraburkholderia xenovorans (strain LB400)).